The following is a 318-amino-acid chain: NADH-ubiquinone oxidoreductase chain 1 (318 aa).

8 helical membrane-spanning segments follow: residues 2 to 22 (FFINIISLIIPILLAVAFLTL), 70 to 90 (MFILAPILALSLALTMWIPLP), 100 to 120 (LGVLFMLAMSSLAVYSILWSG), 147 to 167 (AIILLSVLLMNGSFTLSTLII), 171 to 191 (HMWLIFPAWPLAMMWFISTLA), 223 to 243 (FFLAEYANIIMMNILTTILFF), 253 to 273 (ELYSINFTMKTLLLTICFLWI), and 294 to 314 (LPLTLALCMWHVALPIITASI).

This sequence belongs to the complex I subunit 1 family. Core subunit of respiratory chain NADH dehydrogenase (Complex I) which is composed of 45 different subunits.

Its subcellular location is the mitochondrion inner membrane. It catalyses the reaction a ubiquinone + NADH + 5 H(+)(in) = a ubiquinol + NAD(+) + 4 H(+)(out). Its function is as follows. Core subunit of the mitochondrial membrane respiratory chain NADH dehydrogenase (Complex I) which catalyzes electron transfer from NADH through the respiratory chain, using ubiquinone as an electron acceptor. Essential for the catalytic activity and assembly of complex I. The protein is NADH-ubiquinone oxidoreductase chain 1 (MT-ND1) of Canis lupus familiaris (Dog).